A 104-amino-acid chain; its full sequence is L-rhamnose mutarotase (104 aa).

Residue Tyr18 participates in substrate binding. The active-site Proton donor is the His22. Substrate is bound by residues Tyr41 and 76–77 (WW).

This sequence belongs to the rhamnose mutarotase family. As to quaternary structure, homodimer.

It localises to the cytoplasm. The enzyme catalyses alpha-L-rhamnose = beta-L-rhamnose. It functions in the pathway carbohydrate metabolism; L-rhamnose metabolism. Functionally, involved in the anomeric conversion of L-rhamnose. This is L-rhamnose mutarotase from Salmonella dublin (strain CT_02021853).